We begin with the raw amino-acid sequence, 660 residues long: Bifunctional polymyxin resistance protein ArnA (660 aa).

Positions 1–304 are formyltransferase ArnAFT; it reads MKTVVFAYHD…TLGLVQGSRL (304 aa). A (6R)-10-formyltetrahydrofolate-binding site is contributed by 86-88; that stretch reads HLI. The Proton donor; for formyltransferase activity role is filled by histidine 104. (6R)-10-formyltetrahydrofolate is bound by residues arginine 114 and 136–140; that span reads VKRAD. Residues 314-660 are dehydrogenase ArnADH; it reads RRTRVLILGV…RTVDLTDKPS (347 aa). Residues aspartate 347 and 368–369 contribute to the NAD(+) site; that span reads DI. UDP-alpha-D-glucuronate-binding positions include alanine 393, tyrosine 398, and 432–433; that span reads TS. The active-site Proton acceptor; for decarboxylase activity is the glutamate 434. UDP-alpha-D-glucuronate contacts are provided by residues arginine 460, asparagine 492, 526–535, and tyrosine 613; that span reads KLIDGGKQKR. Arginine 619 (proton donor; for decarboxylase activity) is an active-site residue.

The protein in the N-terminal section; belongs to the Fmt family. UDP-L-Ara4N formyltransferase subfamily. This sequence in the C-terminal section; belongs to the NAD(P)-dependent epimerase/dehydratase family. UDP-glucuronic acid decarboxylase subfamily. As to quaternary structure, homohexamer, formed by a dimer of trimers.

The catalysed reaction is UDP-alpha-D-glucuronate + NAD(+) = UDP-beta-L-threo-pentopyranos-4-ulose + CO2 + NADH. The enzyme catalyses UDP-4-amino-4-deoxy-beta-L-arabinose + (6R)-10-formyltetrahydrofolate = UDP-4-deoxy-4-formamido-beta-L-arabinose + (6S)-5,6,7,8-tetrahydrofolate + H(+). It participates in nucleotide-sugar biosynthesis; UDP-4-deoxy-4-formamido-beta-L-arabinose biosynthesis; UDP-4-deoxy-4-formamido-beta-L-arabinose from UDP-alpha-D-glucuronate: step 1/3. Its pathway is nucleotide-sugar biosynthesis; UDP-4-deoxy-4-formamido-beta-L-arabinose biosynthesis; UDP-4-deoxy-4-formamido-beta-L-arabinose from UDP-alpha-D-glucuronate: step 3/3. It functions in the pathway bacterial outer membrane biogenesis; lipopolysaccharide biosynthesis. Its function is as follows. Bifunctional enzyme that catalyzes the oxidative decarboxylation of UDP-glucuronic acid (UDP-GlcUA) to UDP-4-keto-arabinose (UDP-Ara4O) and the addition of a formyl group to UDP-4-amino-4-deoxy-L-arabinose (UDP-L-Ara4N) to form UDP-L-4-formamido-arabinose (UDP-L-Ara4FN). The modified arabinose is attached to lipid A and is required for resistance to polymyxin and cationic antimicrobial peptides. This is Bifunctional polymyxin resistance protein ArnA from Escherichia coli O17:K52:H18 (strain UMN026 / ExPEC).